Here is a 359-residue protein sequence, read N- to C-terminus: MKRWILFLILSVFLIGCAKTKIVDDIDLVQVAAYDTEAEGKLKGTFAISAYKGGGEGETKIYSASGQTGREVLARASEKSSGPLELGQLRVIIFNEKIIEKGMQEILETLNRNPSVGNAIYLAITNVKGESLLKGNYSKEKEIASYLSSLLEQNMNNGTQPKTNFFMFLNQLDDDARDSYLPMISKKGNVLELNGIALFKRCKMVDKVNPKDLFVFKLLTDNFKQGTYQFKLPGSSNTYATIENIKARTKYKMEGNSKHPFVNAHIQVKAEIQEFTKTKNLDNPKEIKKLEKIMGKEIEKKATTLIKRFIKKDTDPIGLRKLGRTHVRKWNSQEWEESYKHLRFRVTADVKVTQSGVTE.

Positions 1–16 are cleaved as a signal peptide; it reads MKRWILFLILSVFLIG. Cys17 carries N-palmitoyl cysteine lipidation. Cys17 carries S-diacylglycerol cysteine lipidation.

The protein belongs to the GerABKC lipoprotein family.

It is found in the membrane. Its function is as follows. Required for the germination response to inosine. Has no role in L-alanine germination. The polypeptide is Spore germination protein GerQC (gerQC) (Bacillus cereus).